A 325-amino-acid chain; its full sequence is GMP reductase (325 aa).

The active-site Thioimidate intermediate is the C174. 203–226 (LIADGGIRTHGDIAKSIRFGASMV) provides a ligand contact to NADP(+).

It belongs to the IMPDH/GMPR family. GuaC type 2 subfamily.

It carries out the reaction IMP + NH4(+) + NADP(+) = GMP + NADPH + 2 H(+). Its function is as follows. Catalyzes the irreversible NADPH-dependent deamination of GMP to IMP. It functions in the conversion of nucleobase, nucleoside and nucleotide derivatives of G to A nucleotides, and in maintaining the intracellular balance of A and G nucleotides. This Staphylococcus aureus (strain NCTC 8325 / PS 47) protein is GMP reductase.